The chain runs to 302 residues: Chloramphenicol resistance protein (302 aa).

The protein localises to the cell membrane. In terms of biological role, this protein is thought to be a membrane-associated barrier of drug uptake. This is Chloramphenicol resistance protein (cml) from Escherichia coli.